The chain runs to 403 residues: MGSLSDSTPLMKDVQGIRKAQKADGTATVMAIGTAHPPHIISQDSYADFYFRVTNSEHKVELKKKFDRICKKTMIGKRYFNFDEEFLKKYPNITSFDKPSLNDRHDICIPGVPALGAEAAVKAIEEWGRPKSEITHLVFCTSGGVDMPSADFQCAKLLGLRTNVNKYCIYMQGCYAGGTVMRYAKDLAENNRGARVLMVCAELTIIALRGPNDSHIDNAIGNSLFGDGAAALIVGSDPIIGVEKPMFEIVCAKQTVIPNSEEVIHLHLRESGLMFYMTKDSAATISNNIEACLVDVFKSVGMTPPEDWNSLFWIPHPGGRAILDQVEAKLKLRPEKFSATRTVLWDYGNMISACVLYILDEMRRKSAAEGLETYGEGLEWGVLLGFGPGMTIETILLHSLPPV.

The active site involves cysteine 174. Residues serine 281 and 318 to 321 (GGRA) contribute to the CoA site.

It belongs to the thiolase-like superfamily. Chalcone/stilbene synthases family. In terms of assembly, homodimer.

It participates in secondary metabolite biosynthesis; flavonoid biosynthesis. In terms of biological role, catalyzes the iterative condensations of 6, 7 or 8 molecules of malonyl-CoA to produce various aromatic polyketides. Produces the heptaketide aloesone, the aglycone of aloesin, from 7 molecules of malonyl-CoA as a major product. Also able to produce a hexaketide pyrone, a heptaketide 6-(2-acetyl-3,5-dihydroxybenzyl)-4-hydroxy-2-pyrone, a novel heptaketide 6-(2-(2,4-dihydroxy-6-methylphenyl)-2-oxoethyl)-4-hydroxy-2-pyrone and octaketides SEK4/SEK4b. The polypeptide is Aloesone synthase (PKS3) (Aloe arborescens (Kidachi aloe)).